Here is an 87-residue protein sequence, read N- to C-terminus: MENDKGQLVELYVPRKCSATNRIIKADDHASVQINVAKVDEEGRAIPGEYITYALSGYVRSRGESDDSLNRLAQNDGLLKNVWSYSR.

At Met1 the chain carries N-acetylmethionine.

This sequence belongs to the eukaryotic ribosomal protein eS21 family. Component of the small ribosomal subunit (SSU). Mature yeast ribosomes consist of a small (40S) and a large (60S) subunit. The 40S small subunit contains 1 molecule of ribosomal RNA (18S rRNA) and 33 different proteins (encoded by 57 genes). The large 60S subunit contains 3 rRNA molecules (25S, 5.8S and 5S rRNA) and 46 different proteins (encoded by 81 genes). In terms of processing, N-terminally acetylated by acetyltransferase NatB.

It is found in the cytoplasm. In terms of biological role, component of the ribosome, a large ribonucleoprotein complex responsible for the synthesis of proteins in the cell. The small ribosomal subunit (SSU) binds messenger RNAs (mRNAs) and translates the encoded message by selecting cognate aminoacyl-transfer RNA (tRNA) molecules. The large subunit (LSU) contains the ribosomal catalytic site termed the peptidyl transferase center (PTC), which catalyzes the formation of peptide bonds, thereby polymerizing the amino acids delivered by tRNAs into a polypeptide chain. The nascent polypeptides leave the ribosome through a tunnel in the LSU and interact with protein factors that function in enzymatic processing, targeting, and the membrane insertion of nascent chains at the exit of the ribosomal tunnel. eS21 is required for the processing of the 20S rRNA-precursor to mature 18S rRNA in a late step of the maturation of 40S ribosomal subunits. Has a physiological role leading to 18S rRNA stability. In Saccharomyces cerevisiae (strain ATCC 204508 / S288c) (Baker's yeast), this protein is Small ribosomal subunit protein eS21B.